We begin with the raw amino-acid sequence, 204 residues long: Lymphotoxin-alpha (204 aa).

Positions 1-33 (MTPPGRLYLRRVCSTPILLLLGLLLALPPEAQG) are cleaved as a signal peptide. The region spanning 62–204 (PAAHLVGDPS…SSVFFGAFAL (143 aa)) is the THD domain. An N-linked (GlcNAc...) asparagine glycan is attached at N95. C119 and C155 are oxidised to a cystine.

This sequence belongs to the tumor necrosis factor family. In terms of assembly, homotrimer, and heterotrimer of either two LTB and one LTA subunits or (less prevalent) two LTA and one LTB subunits. Interacts with TNFRSF14.

Its subcellular location is the secreted. The protein resides in the membrane. Its function is as follows. Cytokine that in its homotrimeric form binds to TNFRSF1A/TNFR1, TNFRSF1B/TNFBR and TNFRSF14/HVEM. In its heterotrimeric form with LTB binds to TNFRSF3/LTBR. Lymphotoxin is produced by lymphocytes and is cytotoxic for a wide range of tumor cells in vitro and in vivo. The chain is Lymphotoxin-alpha (LTA) from Sus scrofa (Pig).